The sequence spans 120 residues: Large ribosomal subunit protein bL12 (120 aa).

It belongs to the bacterial ribosomal protein bL12 family. Homodimer. Part of the ribosomal stalk of the 50S ribosomal subunit. Forms a multimeric L10(L12)X complex, where L10 forms an elongated spine to which 2 to 4 L12 dimers bind in a sequential fashion. Binds GTP-bound translation factors.

Functionally, forms part of the ribosomal stalk which helps the ribosome interact with GTP-bound translation factors. Is thus essential for accurate translation. The polypeptide is Large ribosomal subunit protein bL12 (Listeria monocytogenes serovar 1/2a (strain ATCC BAA-679 / EGD-e)).